A 196-amino-acid polypeptide reads, in one-letter code: MPQAQIRKTQRNPKLWIAALVAASIVTISYKVYSSYIAEENIEDKKTEGDGGVEEKLRIAKRYTKKSIALTLSHSVLSSQLPLNEILLNSENVTFILPPNLSMDDLVCNIGNADEVERYNLPKTLLNNYKLLHCSNIDGYFNILKNLKPDTLLVCSEDLGIANNVPRDLHRFVKEIINIDQNKDDIYKKLSSIFIK.

The helical transmembrane segment at 15 to 37 (LWIAALVAASIVTISYKVYSSYI) threads the bilayer.

It belongs to the peroxin-22 family.

The protein localises to the peroxisome membrane. Involved in peroxisome biogenesis. The sequence is that of Peroxisome assembly protein 22 (PEX22) from Debaryomyces hansenii (strain ATCC 36239 / CBS 767 / BCRC 21394 / JCM 1990 / NBRC 0083 / IGC 2968) (Yeast).